A 128-amino-acid chain; its full sequence is MNIPSDRLYTDTHEWVNVSGDVATVGITEHAQRELSDIVYIELPKVGERFNQKAVVGVVESVKAASDLYAPVSGEILAVNTQLVEQPSLINSNPYGEGWIFKMKMTNPDELSSLKDAEAYQELLQDKE.

The Lipoyl-binding domain occupies 22-104; that stretch reads VATVGITEHA…YGEGWIFKMK (83 aa). Lys-63 carries the N6-lipoyllysine modification.

This sequence belongs to the GcvH family. In terms of assembly, the glycine cleavage system is composed of four proteins: P, T, L and H. (R)-lipoate serves as cofactor.

In terms of biological role, the glycine cleavage system catalyzes the degradation of glycine. The H protein shuttles the methylamine group of glycine from the P protein to the T protein. The protein is Glycine cleavage system H protein of Methylacidiphilum infernorum (isolate V4) (Methylokorus infernorum (strain V4)).